Here is a 195-residue protein sequence, read N- to C-terminus: Holliday junction branch migration complex subunit RuvA (195 aa).

Residues 1 to 61 (MYEYLDGVVV…ENDQTLYGFK (61 aa)) are domain I. The interval 62 to 139 (KAEDKELFLN…AVENEVGTLF (78 aa)) is domain II. The interval 139-143 (FDLST) is flexible linker. Residues 144–195 (TSNQALDEALEALIALGYSEKEVKKLTKKLSEQTDRTTDQYISSGLKLLMKG) form a domain III region.

Belongs to the RuvA family. As to quaternary structure, homotetramer. Forms an RuvA(8)-RuvB(12)-Holliday junction (HJ) complex. HJ DNA is sandwiched between 2 RuvA tetramers; dsDNA enters through RuvA and exits via RuvB. An RuvB hexamer assembles on each DNA strand where it exits the tetramer. Each RuvB hexamer is contacted by two RuvA subunits (via domain III) on 2 adjacent RuvB subunits; this complex drives branch migration. In the full resolvosome a probable DNA-RuvA(4)-RuvB(12)-RuvC(2) complex forms which resolves the HJ.

It is found in the cytoplasm. The RuvA-RuvB-RuvC complex processes Holliday junction (HJ) DNA during genetic recombination and DNA repair, while the RuvA-RuvB complex plays an important role in the rescue of blocked DNA replication forks via replication fork reversal (RFR). RuvA specifically binds to HJ cruciform DNA, conferring on it an open structure. The RuvB hexamer acts as an ATP-dependent pump, pulling dsDNA into and through the RuvAB complex. HJ branch migration allows RuvC to scan DNA until it finds its consensus sequence, where it cleaves and resolves the cruciform DNA. This Pediococcus pentosaceus (strain ATCC 25745 / CCUG 21536 / LMG 10740 / 183-1w) protein is Holliday junction branch migration complex subunit RuvA.